Consider the following 375-residue polypeptide: 23S rRNA (uracil(747)-C(5))-methyltransferase RlmC (375 aa).

[4Fe-4S] cluster contacts are provided by Cys-3, Cys-11, Cys-14, and Cys-87. Residues Gln-212, Phe-241, Glu-262, and Asn-307 each contribute to the S-adenosyl-L-methionine site. The active-site Nucleophile is Cys-334.

Belongs to the class I-like SAM-binding methyltransferase superfamily. RNA M5U methyltransferase family. RlmC subfamily.

The catalysed reaction is uridine(747) in 23S rRNA + S-adenosyl-L-methionine = 5-methyluridine(747) in 23S rRNA + S-adenosyl-L-homocysteine + H(+). Catalyzes the formation of 5-methyl-uridine at position 747 (m5U747) in 23S rRNA. This Vibrio cholerae serotype O1 (strain ATCC 39541 / Classical Ogawa 395 / O395) protein is 23S rRNA (uracil(747)-C(5))-methyltransferase RlmC.